Here is a 142-residue protein sequence, read N- to C-terminus: Small ribosomal subunit protein uS9c (142 aa).

It belongs to the universal ribosomal protein uS9 family.

It is found in the plastid. Its subcellular location is the chloroplast. This is Small ribosomal subunit protein uS9c (rps9) from Stigeoclonium helveticum (Green alga).